Consider the following 117-residue polypeptide: UPF0342 protein OB1136 (117 aa).

Belongs to the UPF0342 family.

The protein is UPF0342 protein OB1136 of Oceanobacillus iheyensis (strain DSM 14371 / CIP 107618 / JCM 11309 / KCTC 3954 / HTE831).